Here is a 456-residue protein sequence, read N- to C-terminus: tRNA-2-methylthio-N(6)-dimethylallyladenosine synthase (456 aa).

Residues 6 to 125 (KRLFIKTYGC…LPELIAQAHR (120 aa)) form the MTTase N-terminal domain. Residues Cys-15, Cys-51, Cys-88, Cys-163, Cys-167, and Cys-170 each coordinate [4Fe-4S] cluster. Positions 149-385 (QVEGYSAFVT…QELLSDQQAA (237 aa)) constitute a Radical SAM core domain. The TRAM domain occupies 388–450 (ESMIGRTLPV…RNSLSGSLTG (63 aa)).

This sequence belongs to the methylthiotransferase family. MiaB subfamily. As to quaternary structure, monomer. [4Fe-4S] cluster is required as a cofactor.

It is found in the cytoplasm. It carries out the reaction N(6)-dimethylallyladenosine(37) in tRNA + (sulfur carrier)-SH + AH2 + 2 S-adenosyl-L-methionine = 2-methylsulfanyl-N(6)-dimethylallyladenosine(37) in tRNA + (sulfur carrier)-H + 5'-deoxyadenosine + L-methionine + A + S-adenosyl-L-homocysteine + 2 H(+). Its function is as follows. Catalyzes the methylthiolation of N6-(dimethylallyl)adenosine (i(6)A), leading to the formation of 2-methylthio-N6-(dimethylallyl)adenosine (ms(2)i(6)A) at position 37 in tRNAs that read codons beginning with uridine. This chain is tRNA-2-methylthio-N(6)-dimethylallyladenosine synthase, found in Maricaulis maris (strain MCS10) (Caulobacter maris).